The chain runs to 356 residues: Probable farnesyl diphosphate synthase DDB_G0278823 (356 aa).

Isopentenyl diphosphate is bound by residues lysine 55, arginine 58, and glutamine 94. The Mg(2+) site is built by aspartate 101 and aspartate 105. Dimethylallyl diphosphate is bound at residue arginine 110. Arginine 111 is a binding site for isopentenyl diphosphate. 5 residues coordinate dimethylallyl diphosphate: lysine 203, threonine 204, glutamine 243, lysine 260, and lysine 269.

The protein belongs to the FPP/GGPP synthase family. Mg(2+) serves as cofactor.

The protein resides in the cytoplasm. It catalyses the reaction isopentenyl diphosphate + dimethylallyl diphosphate = (2E)-geranyl diphosphate + diphosphate. The enzyme catalyses isopentenyl diphosphate + (2E)-geranyl diphosphate = (2E,6E)-farnesyl diphosphate + diphosphate. Its pathway is isoprenoid biosynthesis; farnesyl diphosphate biosynthesis; farnesyl diphosphate from geranyl diphosphate and isopentenyl diphosphate: step 1/1. It functions in the pathway isoprenoid biosynthesis; geranyl diphosphate biosynthesis; geranyl diphosphate from dimethylallyl diphosphate and isopentenyl diphosphate: step 1/1. With respect to regulation, inhibited by aminobisphosphonate drugs (aBP), such as risedronate and alendronate. Its function is as follows. Key enzyme in isoprenoid biosynthesis which catalyzes the formation of farnesyl diphosphate (FPP), a sterol precursor. The protein is Probable farnesyl diphosphate synthase DDB_G0278823 of Dictyostelium discoideum (Social amoeba).